The chain runs to 214 residues: METQKRHEYHSVCHTCRRTENTRMKVKMMSSSNRVLVIALALTLYIVEVASAETLCGGELVDALQFVCEDRGFYFSRPTSRSNSRRSQNRGIVEECCFRSCDLNLLEQYCAKPAKSERDVSATSLQIIPMVPTIKQDVPRKHVTVKYSKYEAWQRKAAQRLRRGVPAILRARKFRRQAVKIKAQEQAMFHRPLITLPSKLPPVLPPTDNYVSHN.

A b region spans residues 48 to 79 (EVASAETLCGGELVDALQFVCEDRGFYFSRPT). 3 disulfide bridges follow: C56–C97, C68–C110, and C96–C101. Positions 80–90 (SRSNSRRSQNR) are c. Residues 91-111 (GIVEECCFRSCDLNLLEQYCA) form an a region. Residues 112–117 (KPAKSE) are d. Residues 118-214 (RDVSATSLQI…PPTDNYVSHN (97 aa)) constitute a propeptide, e peptide.

This sequence belongs to the insulin family.

It localises to the secreted. The insulin-like growth factors, isolated from plasma, are structurally and functionally related to insulin but have a much higher growth-promoting activity. Acts as a ligand for integrin which is required for IGF2 signaling. In Oncorhynchus mykiss (Rainbow trout), this protein is Insulin-like growth factor 2.